The primary structure comprises 462 residues: Argininosuccinate lyase (462 aa).

It belongs to the lyase 1 family. Argininosuccinate lyase subfamily.

The protein localises to the cytoplasm. The catalysed reaction is 2-(N(omega)-L-arginino)succinate = fumarate + L-arginine. It functions in the pathway amino-acid biosynthesis; L-arginine biosynthesis; L-arginine from L-ornithine and carbamoyl phosphate: step 3/3. The polypeptide is Argininosuccinate lyase (Bacillus thuringiensis (strain Al Hakam)).